The sequence spans 868 residues: Rifampicin phosphotransferase (868 aa).

The tract at residues 1–313 (MSSFVLDFQE…IYIVQSRPIT (313 aa)) is ATP-binding. ATP is bound by residues Lys22, Arg116, Gly131, Thr135, Gln182, Glu296, Gln308, and Arg310. Residues 326-756 (NHVYISVGHQ…TSDGEIITGK (431 aa)) are rifampicin-binding. The swivel phosphohistidine stretch occupies residues 769–867 (GLPVSSGVVE…VHGTEGYIEV (99 aa)). The Tele-phosphohistidine intermediate role is filled by His827.

It belongs to the rifampicin phosphotransferase family.

The catalysed reaction is rifampicin + ATP + H2O = 21-phosphorifampicin + AMP + phosphate + 2 H(+). Its function is as follows. Catalyzes the phosphorylation of rifampicin, also known as rifampin (RIF), leading to its inactivation. Confers high level resistance to a variety of clinically used rifamycin antibiotics. Does not show phosphoenolpyruvate (PEP) synthase activity. The sequence is that of Rifampicin phosphotransferase from Bacillus cereus (strain ATCC 14579 / DSM 31 / CCUG 7414 / JCM 2152 / NBRC 15305 / NCIMB 9373 / NCTC 2599 / NRRL B-3711).